We begin with the raw amino-acid sequence, 364 residues long: MAKQTPLYDQHLACGARMVDFHGWMMPLHYGSQMDEHHIVRTHAGMFDVSHMTIVDLHGTGCRDFLRYLLANDIAKLTEKGKALYTGMLNASGGVIDDLIVYYLSNDFYRLVVNSATREKDLAWINEHVANYPVDIQVRDDLALIAVQGPDAQAKVESLLNDEQKQTIAGMKPFFGVQAGDLFIATTGYTGEAGYEVALPKEQAADFWQKLLSVGVKPAGLGARDTLRLEAGMNLYGQEMDETISPLVANMGWTIAWKPEDRQFIGREALEKQREEGTEQLVGLVMREKGVLRGGLAVSFTDEMGTLHSGVITSGTFSPTLGFSIALARVPQGIGEQAVVQIRNREMPVQVVKPSFVRAGKPLV.

This sequence belongs to the GcvT family. In terms of assembly, the glycine cleavage system is composed of four proteins: P, T, L and H.

It catalyses the reaction N(6)-[(R)-S(8)-aminomethyldihydrolipoyl]-L-lysyl-[protein] + (6S)-5,6,7,8-tetrahydrofolate = N(6)-[(R)-dihydrolipoyl]-L-lysyl-[protein] + (6R)-5,10-methylene-5,6,7,8-tetrahydrofolate + NH4(+). The glycine cleavage system catalyzes the degradation of glycine. The polypeptide is Aminomethyltransferase (Photorhabdus laumondii subsp. laumondii (strain DSM 15139 / CIP 105565 / TT01) (Photorhabdus luminescens subsp. laumondii)).